The primary structure comprises 24 residues: Brevinin-1Ba (24 aa).

Cysteines 18 and 24 form a disulfide.

As to expression, expressed by the skin glands.

The protein resides in the secreted. Functionally, antibacterial activity against Gram-positive bacterium S.aureus. This chain is Brevinin-1Ba, found in Lithobates berlandieri (Rio Grande leopard frog).